Reading from the N-terminus, the 477-residue chain is Glycogen synthase (477 aa).

Lysine 15 contacts ADP-alpha-D-glucose.

It belongs to the glycosyltransferase 1 family. Bacterial/plant glycogen synthase subfamily.

The enzyme catalyses [(1-&gt;4)-alpha-D-glucosyl](n) + ADP-alpha-D-glucose = [(1-&gt;4)-alpha-D-glucosyl](n+1) + ADP + H(+). Its pathway is glycan biosynthesis; glycogen biosynthesis. Synthesizes alpha-1,4-glucan chains using ADP-glucose. The sequence is that of Glycogen synthase from Erwinia tasmaniensis (strain DSM 17950 / CFBP 7177 / CIP 109463 / NCPPB 4357 / Et1/99).